An 89-amino-acid chain; its full sequence is Small ribosomal subunit protein uS15 (89 aa).

This sequence belongs to the universal ribosomal protein uS15 family. Part of the 30S ribosomal subunit. Forms a bridge to the 50S subunit in the 70S ribosome, contacting the 23S rRNA.

One of the primary rRNA binding proteins, it binds directly to 16S rRNA where it helps nucleate assembly of the platform of the 30S subunit by binding and bridging several RNA helices of the 16S rRNA. Its function is as follows. Forms an intersubunit bridge (bridge B4) with the 23S rRNA of the 50S subunit in the ribosome. The protein is Small ribosomal subunit protein uS15 of Dechloromonas aromatica (strain RCB).